The following is a 448-amino-acid chain: Probable glycine dehydrogenase (decarboxylating) subunit 1 (448 aa).

The protein belongs to the GcvP family. N-terminal subunit subfamily. In terms of assembly, the glycine cleavage system is composed of four proteins: P, T, L and H. In this organism, the P 'protein' is a heterodimer of two subunits.

It carries out the reaction N(6)-[(R)-lipoyl]-L-lysyl-[glycine-cleavage complex H protein] + glycine + H(+) = N(6)-[(R)-S(8)-aminomethyldihydrolipoyl]-L-lysyl-[glycine-cleavage complex H protein] + CO2. Its function is as follows. The glycine cleavage system catalyzes the degradation of glycine. The P protein binds the alpha-amino group of glycine through its pyridoxal phosphate cofactor; CO(2) is released and the remaining methylamine moiety is then transferred to the lipoamide cofactor of the H protein. The chain is Probable glycine dehydrogenase (decarboxylating) subunit 1 from Bacillus licheniformis (strain ATCC 14580 / DSM 13 / JCM 2505 / CCUG 7422 / NBRC 12200 / NCIMB 9375 / NCTC 10341 / NRRL NRS-1264 / Gibson 46).